We begin with the raw amino-acid sequence, 589 residues long: Aspartate--tRNA ligase (589 aa).

E174 contributes to the L-aspartate binding site. The segment at 198 to 201 (QLFK) is aspartate. R220 contacts L-aspartate. ATP contacts are provided by residues 220–222 (RDE) and Q229. Position 448 (H448) interacts with L-aspartate. E483 is an ATP binding site. L-aspartate is bound at residue R490. 535–538 (GIDR) provides a ligand contact to ATP.

Belongs to the class-II aminoacyl-tRNA synthetase family. Type 1 subfamily. As to quaternary structure, homodimer.

It localises to the cytoplasm. The catalysed reaction is tRNA(Asp) + L-aspartate + ATP = L-aspartyl-tRNA(Asp) + AMP + diphosphate. Its function is as follows. Catalyzes the attachment of L-aspartate to tRNA(Asp) in a two-step reaction: L-aspartate is first activated by ATP to form Asp-AMP and then transferred to the acceptor end of tRNA(Asp). The chain is Aspartate--tRNA ligase from Xylella fastidiosa (strain M12).